The following is a 213-amino-acid chain: Response regulator GacA (213 aa).

The 117-residue stretch at 3–119 folds into the Response regulatory domain; that stretch reads RVLVVDDHDL…EMVQAIRLVF (117 aa). Residue aspartate 54 is modified to 4-aspartylphosphate. The HTH luxR-type domain occupies 142 to 207; that stretch reads SDSPFDALSE…ELTLLAVRHG (66 aa). A DNA-binding region (H-T-H motif) is located at residues 166–185; the sequence is VQIISDKLCLSPKTVNTYRY.

Post-translationally, phosphorylated by GacS.

In terms of biological role, member of the two-component regulatory system GacA/GacS which controls the expression of secondary metabolites and extracellular products. Acts (probably primarily) by activating expression of CsrA1 and CsrA2 antagonist small RNAs (sRNA) RsmX, RsmY and RsmZ which bind to and prevent translation repression by CsrA1 and CsrA2. Involved in the regulation of secondary metabolism and in the synthesis of the antifungal factors cyanide, 2,4-diacetylphloroglucinol and pyoluteorin. Involved in synthesis of the autoinducing signal (unrelated to N-acylhomoserine lactones, induces the Gac/Csr cascade). Exercises positive post-transcriptional control over the hcnABC and aprA genes; acts upstream of CsrA2 (rsmA). Controls expression of csrA1 (rsmE) and csrA2. The protein is Response regulator GacA of Pseudomonas protegens (strain DSM 19095 / LMG 27888 / CFBP 6595 / CHA0).